A 182-amino-acid polypeptide reads, in one-letter code: Glycerol-3-phosphate acyltransferase 1 (182 aa).

Helical transmembrane passes span 5–25, 54–74, 81–101, 117–137, and 157–177; these read MQFL…AYIV, GYFI…VSIA, STFV…PIVF, IAFD…FYLI, and ILYS…VLIL.

This sequence belongs to the PlsY family. Probably interacts with PlsX.

It is found in the cell membrane. The enzyme catalyses an acyl phosphate + sn-glycerol 3-phosphate = a 1-acyl-sn-glycero-3-phosphate + phosphate. It participates in lipid metabolism; phospholipid metabolism. Its function is as follows. Catalyzes the transfer of an acyl group from acyl-phosphate (acyl-PO(4)) to glycerol-3-phosphate (G3P) to form lysophosphatidic acid (LPA). This enzyme utilizes acyl-phosphate as fatty acyl donor, but not acyl-CoA or acyl-ACP. This Bacillus cereus (strain ATCC 10987 / NRS 248) protein is Glycerol-3-phosphate acyltransferase 1.